Consider the following 858-residue polypeptide: MGDHLDLLLGVVLMAGPVFGIPSCSFDGRIAFYRFCNLTQVPQVLNTTERLLLSFNYIRTVTASSFPFLEQLQLLELGSQYTPLTIDKEAFRNLPNLRILDLGSSKIYFLHPDAFQGLFHLFELRLYFCGLSDAVLKDGYFRNLKALTRLDLSKNQIRSLYLHPSFGKLNSLKSIDFSSNQIFLVCEHELEPLQGKTLSFFSLAANSLYSRVSVDWGKCMNPFRNMVLEILDVSGNGWTVDITGNFSNAISKSQAFSLILAHHIMGAGFGFHNIKDPDQNTFAGLARSSVRHLDLSHGFVFSLNSRVFETLKDLKVLNLAYNKINKIADEAFYGLDNLQVLNLSYNLLGELYSSNFYGLPKVAYIDLQKNHIAIIQDQTFKFLEKLQTLDLRDNALTTIHFIPSIPDIFLSGNKLVTLPKINLTANLIHLSENRLENLDILYFLLRVPHLQILILNQNRFSSCSGDQTPSENPSLEQLFLGENMLQLAWETELCWDVFEGLSHLQVLYLNHNYLNSLPPGVFSHLTALRGLSLNSNRLTVLSHNDLPANLEILDISRNQLLAPNPDVFVSLSVLDITHNKFICECELSTFINWLNHTNVTIAGPPADIYCVYPDSFSGVSLFSLSTEGCDEEEVLKSLKFSLFIVCTVTLTLFLMTILTVTKFRGFCFICYKTAQRLVFKDHPQGTEPDMYKYDAYLCFSSKDFTWVQNALLKHLDTQYSDQNRFNLCFEERDFVPGENRIANIQDAIWNSRKIVCLVSRHFLRDGWCLEAFSYAQGRCLSDLNSALIMVVVGSLSQYQLMKHQSIRGFVQKQQYLRWPEDLQDVGWFLHKLSQQILKKEKEKKKDNNIPLQTVATIS.

An N-terminal signal peptide occupies residues 1 to 20 (MGDHLDLLLGVVLMAGPVFG). The Extracellular portion of the chain corresponds to 21-639 (IPSCSFDGRI…DEEEVLKSLK (619 aa)). Asn37 and Asn46 each carry an N-linked (GlcNAc...) asparagine glycan. LRR repeat units follow at residues 45–68 (LNTT…SFPF), 71–93 (QLQL…AFRN), 95–117 (PNLR…AFQG), 120–143 (HLFE…YFRN), 146–166 (ALTR…HPSF), 171–192 (SLKS…ELEP), 197–211 (TLSF…LYSR), 214–229 (VDWG…MVLE), and 234–235 (SG). N-linked (GlcNAc...) asparagine glycosylation is present at Asn245. LRR repeat units follow at residues 260 to 284 (LAHH…TFAG), 289 to 301 (SVRH…GFVF), 313 to 334 (DLKV…AFYG), 337 to 355 (NLQV…YSSN), 385 to 401 (KLQT…TIHF), 412 to 431 (GNKL…IHLS), 449 to 470 (HLQI…QTPS), 474 to 495 (SLEQ…ELCW), 503 to 524 (HLQV…VFSH), 527 to 546 (ALRG…HNDL), and 549 to 567 (NLEI…NPDV). A glycan (N-linked (GlcNAc...) asparagine) is linked at Asn342. N-linked (GlcNAc...) asparagine glycosylation occurs at Asn422. Positions 579–631 (NKFICECELSTFINWLNHTNVTIAGPPADIYCVYPDSFSGVSLFSLSTEGCDE) constitute an LRRCT domain. 2 disulfides stabilise this stretch: Cys583-Cys610 and Cys585-Cys629. N-linked (GlcNAc...) asparagine glycosylation is found at Asn595 and Asn598. A helical membrane pass occupies residues 640 to 660 (FSLFIVCTVTLTLFLMTILTV). The Cytoplasmic segment spans residues 661-858 (TKFRGFCFIC…IPLQTVATIS (198 aa)). Residues 691-836 (YKYDAYLCFS…WFLHKLSQQI (146 aa)) enclose the TIR domain. Phosphotyrosine is present on Tyr798. Residue Ser805 is modified to Phosphoserine; by PKD/PRKD1.

The protein belongs to the Toll-like receptor family. Homodimer. Interacts with MYD88 (via TIR domain). Interacts with TICAM1 (via TIR domain). Interacts with UNC93B1; this interaction is essential for proper TLR5 localization to the plasma membrane. Phosphorylated at Ser-805 by PKD/PRKD1; phosphorylation induces the production of inflammatory cytokines. In terms of processing, phosphorylated at Tyr-798 upon flagellin binding; required for signaling. As to expression, highly expressed on the basolateral surface of intestinal epithelia. Expressed also in other cells such as lung epithelial cells.

It localises to the cell membrane. Functionally, pattern recognition receptor (PRR) located on the cell surface that participates in the activation of innate immunity and inflammatory response. Recognizes small molecular motifs named pathogen-associated molecular pattern (PAMPs) expressed by pathogens and microbe-associated molecular patterns (MAMPs) usually expressed by resident microbiota. Upon ligand binding such as bacterial flagellins, recruits intracellular adapter proteins MYD88 and TRIF leading to NF-kappa-B activation, cytokine secretion and induction of the inflammatory response. Plays thereby an important role in the relationship between the intestinal epithelium and enteric microbes and contributes to the gut microbiota composition throughout life. The sequence is that of Toll-like receptor 5 (TLR5) from Homo sapiens (Human).